Consider the following 428-residue polypeptide: C4-dicarboxylate transport protein (428 aa).

The next 9 helical transmembrane spans lie at 7–27 (SLYFWVLVAIALGVILGIVAP), 40–60 (FIKLIKMVIAPIIFCTVVLGI), 75–95 (LALLYFEVVSTVSLILGLLIV), 143–163 (AFARGEILQVLLLAVLFGIAL), 196–216 (PIGAFGAMAFTIGAYGIGSLF), 221–241 (LMATFYLTCLCFIFLVLGAIA), 306–326 (IYLTMAAVFVAQATNSAMTLG), 329–349 (FTLLAVLLLMSKGAAGVTGSG), and 351–371 (IVLAATLSAIGKVPVGGLALI).

Belongs to the dicarboxylate/amino acid:cation symporter (DAACS) (TC 2.A.23) family.

The protein resides in the cell inner membrane. In terms of biological role, responsible for the transport of dicarboxylates such as succinate, fumarate, and malate from the periplasm across the membrane. The sequence is that of C4-dicarboxylate transport protein from Solibacter usitatus (strain Ellin6076).